Reading from the N-terminus, the 526-residue chain is Bifunctional purine biosynthesis protein PurH (526 aa).

One can recognise an MGS-like domain in the interval methionine 1–threonine 147.

The protein belongs to the PurH family.

It carries out the reaction (6R)-10-formyltetrahydrofolate + 5-amino-1-(5-phospho-beta-D-ribosyl)imidazole-4-carboxamide = 5-formamido-1-(5-phospho-D-ribosyl)imidazole-4-carboxamide + (6S)-5,6,7,8-tetrahydrofolate. The enzyme catalyses IMP + H2O = 5-formamido-1-(5-phospho-D-ribosyl)imidazole-4-carboxamide. It participates in purine metabolism; IMP biosynthesis via de novo pathway; 5-formamido-1-(5-phospho-D-ribosyl)imidazole-4-carboxamide from 5-amino-1-(5-phospho-D-ribosyl)imidazole-4-carboxamide (10-formyl THF route): step 1/1. The protein operates within purine metabolism; IMP biosynthesis via de novo pathway; IMP from 5-formamido-1-(5-phospho-D-ribosyl)imidazole-4-carboxamide: step 1/1. This Neisseria gonorrhoeae (strain ATCC 700825 / FA 1090) protein is Bifunctional purine biosynthesis protein PurH.